A 231-amino-acid chain; its full sequence is Large ribosomal subunit protein uL1 (231 aa).

Belongs to the universal ribosomal protein uL1 family. Part of the 50S ribosomal subunit.

Binds directly to 23S rRNA. The L1 stalk is quite mobile in the ribosome, and is involved in E site tRNA release. Its function is as follows. Protein L1 is also a translational repressor protein, it controls the translation of the L11 operon by binding to its mRNA. The sequence is that of Large ribosomal subunit protein uL1 from Halalkalibacterium halodurans (strain ATCC BAA-125 / DSM 18197 / FERM 7344 / JCM 9153 / C-125) (Bacillus halodurans).